A 382-amino-acid chain; its full sequence is Dual-specificity RNA methyltransferase RlmN (382 aa).

The Proton acceptor role is filled by Glu-95. Residues 101 to 348 enclose the Radical SAM core domain; sequence EDDRGTLCIS…TTVRKTRGDD (248 aa). Cys-108 and Cys-353 form a disulfide bridge. Positions 115, 119, and 122 each coordinate [4Fe-4S] cluster. S-adenosyl-L-methionine contacts are provided by residues 179 to 180, Ser-211, 233 to 235, and Asn-310; these read GE and SLH. Cys-353 (S-methylcysteine intermediate) is an active-site residue.

It belongs to the radical SAM superfamily. RlmN family. [4Fe-4S] cluster is required as a cofactor.

Its subcellular location is the cytoplasm. It catalyses the reaction adenosine(2503) in 23S rRNA + 2 reduced [2Fe-2S]-[ferredoxin] + 2 S-adenosyl-L-methionine = 2-methyladenosine(2503) in 23S rRNA + 5'-deoxyadenosine + L-methionine + 2 oxidized [2Fe-2S]-[ferredoxin] + S-adenosyl-L-homocysteine. It carries out the reaction adenosine(37) in tRNA + 2 reduced [2Fe-2S]-[ferredoxin] + 2 S-adenosyl-L-methionine = 2-methyladenosine(37) in tRNA + 5'-deoxyadenosine + L-methionine + 2 oxidized [2Fe-2S]-[ferredoxin] + S-adenosyl-L-homocysteine. Functionally, specifically methylates position 2 of adenine 2503 in 23S rRNA and position 2 of adenine 37 in tRNAs. m2A2503 modification seems to play a crucial role in the proofreading step occurring at the peptidyl transferase center and thus would serve to optimize ribosomal fidelity. The polypeptide is Dual-specificity RNA methyltransferase RlmN (Bordetella parapertussis (strain 12822 / ATCC BAA-587 / NCTC 13253)).